Consider the following 170-residue polypeptide: Urease accessory protein UreE (170 aa).

The disordered stretch occupies residues 144–170 (GGHSHDDHDHHHGHHEHDHEHHHHHHD). Over residues 146–162 (HSHDDHDHHHGHHEHDH) the composition is skewed to basic and acidic residues.

The protein belongs to the UreE family.

It is found in the cytoplasm. Functionally, involved in urease metallocenter assembly. Binds nickel. Probably functions as a nickel donor during metallocenter assembly. This is Urease accessory protein UreE from Brucella anthropi (strain ATCC 49188 / DSM 6882 / CCUG 24695 / JCM 21032 / LMG 3331 / NBRC 15819 / NCTC 12168 / Alc 37) (Ochrobactrum anthropi).